Consider the following 329-residue polypeptide: Mas-related G-protein coupled receptor member X2 (329 aa).

Residues 1–33 (MDPTTPAWRTESTTMNGNDQALPLLCGKEILIS) lie on the Extracellular side of the membrane. The chain crosses the membrane as a helical span at residues 34–54 (VFLILFIALVGLVGNGFVLWL). Over 55–63 (LGFRMRRNA) the chain is Cytoplasmic. The helical transmembrane segment at 64–84 (FSVYVLSLAGADFLFLCFQII) threads the bilayer. The Extracellular segment spans residues 85 to 96 (NCLVYLSNFFCS). A helical transmembrane segment spans residues 97-117 (SSINFPSFFTTVMTCAYLAGL). Topologically, residues 118-144 (SMLSTISTERCLSVLWPIWYRCRRPRH) are cytoplasmic. A helical transmembrane segment spans residues 145–165 (LSAVACVLLWALSLLLSILEG). Over 166–183 (KFCGLFGDGDSGWCQTFD) the chain is Extracellular. The helical transmembrane segment at 184-204 (LITAAWLIFLFMVLCGSSLAL) threads the bilayer. The Cytoplasmic segment spans residues 205–227 (LVRILCGSRGLPLTRLYLTILLT). A helical transmembrane segment spans residues 228–248 (VLVFLLCGLPFGIQWFLILWI). Over 249–263 (WKNSDVLFCHIHPVS) the chain is Extracellular. Residues 264–284 (VVLSSLNSSANPIIYFFVGSF) traverse the membrane as a helical segment. The Cytoplasmic segment spans residues 285 to 329 (RKQWQLQQPILKLALQRALQDIAEVDHSEGCFRQGTPEMSRSSLV).

This sequence belongs to the G-protein coupled receptor 1 family. Mas subfamily.

It is found in the cell membrane. Functionally, mast cell-specific receptor for basic secretagogues, i.e. cationic amphiphilic drugs, as well as endo- or exogenous peptides, consisting of a basic head group and a hydrophobic core. Recognizes and binds small molecules containing a cyclized tetrahydroisoquinoline (THIQ), such as non-steroidal neuromuscular blocking drugs (NMBDs), including tubocurarine and atracurium. In response to these compounds, mediates pseudo-allergic reactions characterized by histamine release, inflammation and airway contraction. The chain is Mas-related G-protein coupled receptor member X2 (MRGPRX2) from Gorilla gorilla gorilla (Western lowland gorilla).